A 467-amino-acid polypeptide reads, in one-letter code: Probable glutamate decarboxylase gamma (467 aa).

K278 bears the N6-(pyridoxal phosphate)lysine mark.

It belongs to the group II decarboxylase family. Pyridoxal 5'-phosphate serves as cofactor.

The enzyme catalyses L-glutamate + H(+) = 4-aminobutanoate + CO2. The sequence is that of Probable glutamate decarboxylase gamma from Listeria innocua serovar 6a (strain ATCC BAA-680 / CLIP 11262).